A 575-amino-acid polypeptide reads, in one-letter code: Acyloxyacyl hydrolase (575 aa).

The N-terminal stretch at 1–25 (MKSPWRILVVSPLLLLPLHSSTSRA) is a signal peptide. Residues 26 to 34 (HDNQPGTIR) constitute a propeptide that is removed on maturation. In terms of domain architecture, Saposin B-type spans 36-117 (DHYTCVGCVL…HTLEFCKQEP (82 aa)). Positions 37–69 (HYTCVGCVLVVSVIEQLAQVHNSTVQASMERLC) are important for enzyme activity, localization to cytoplasmic vesicles, and protein stability. 8 disulfide bridges follow: Cys-40–Cys-113, Cys-43–Cys-107, Cys-69–Cys-82, Cys-122–Cys-453, Cys-159–Cys-168, Cys-205–Cys-229, Cys-248–Cys-328, and Cys-375–Cys-459. N-linked (GlcNAc...) asparagine glycosylation is present at Asn-58. A lipopolysaccharide binding region spans residues 172–176 (KLAIK). Ca(2+) is bound by residues Asp-183, Asp-185, Asp-187, Tyr-189, Asp-204, Asn-206, Asp-207, Asp-209, Val-212, Asp-222, Asp-226, Asn-228, Asn-230, Ile-232, and Glu-244. N-linked (GlcNAc...) asparagine glycosylation is present at Asn-206. The active site involves Ser-262. A glycan (N-linked (GlcNAc...) asparagine) is linked at Asn-466.

Heterodimer of the large and small subunits; disulfide-linked. Ca(2+) is required as a cofactor. In terms of processing, cleaved into a large and a small subunit. The small subunit is N-glycosylated.

Its subcellular location is the secreted. It is found in the cytoplasmic vesicle. The enzyme catalyses a 3-(acyloxy)acyl derivative of bacterial toxin + H2O = a 3-hydroxyacyl derivative of bacterial toxin + a fatty acid + H(+). In terms of biological role, removes the secondary (acyloxyacyl-linked) fatty acyl chains from the lipid A region of bacterial lipopolysaccharides (LPS). By breaking down LPS, terminates the host response to bacterial infection and prevents prolonged and damaging inflammatory responses. In peritoneal macrophages, seems to be important for recovery from a state of immune tolerance following infection by Gram-negative bacteria. This chain is Acyloxyacyl hydrolase, found in Oryctolagus cuniculus (Rabbit).